Consider the following 462-residue polypeptide: Argininosuccinate lyase (462 aa).

The protein belongs to the lyase 1 family. Argininosuccinate lyase subfamily.

It is found in the cytoplasm. The catalysed reaction is 2-(N(omega)-L-arginino)succinate = fumarate + L-arginine. Its pathway is amino-acid biosynthesis; L-arginine biosynthesis; L-arginine from L-ornithine and carbamoyl phosphate: step 3/3. The chain is Argininosuccinate lyase from Leuconostoc citreum (strain KM20).